The primary structure comprises 291 residues: 33 kDa chaperonin (291 aa).

2 disulfide bridges follow: C229-C231 and C262-C265.

Belongs to the HSP33 family. Post-translationally, under oxidizing conditions two disulfide bonds are formed involving the reactive cysteines. Under reducing conditions zinc is bound to the reactive cysteines and the protein is inactive.

The protein localises to the cytoplasm. Redox regulated molecular chaperone. Protects both thermally unfolding and oxidatively damaged proteins from irreversible aggregation. Plays an important role in the bacterial defense system toward oxidative stress. This chain is 33 kDa chaperonin, found in Vibrio vulnificus (strain YJ016).